Consider the following 222-residue polypeptide: Small ribosomal subunit protein uS3 (222 aa).

The 69-residue stretch at 39–107 (IRKYIKTKFY…QININIAEIK (69 aa)) folds into the KH type-2 domain.

The protein belongs to the universal ribosomal protein uS3 family. In terms of assembly, part of the 30S ribosomal subunit. Forms a tight complex with proteins S10 and S14.

Binds the lower part of the 30S subunit head. Binds mRNA in the 70S ribosome, positioning it for translation. The protein is Small ribosomal subunit protein uS3 of Carboxydothermus hydrogenoformans (strain ATCC BAA-161 / DSM 6008 / Z-2901).